Reading from the N-terminus, the 86-residue chain is Putative pro-MCH-like protein 2 (86 aa).

Residues 31 to 49 (GSVAFPAENGVQDTESTLE) form an NGE-like region. Residues 40 to 60 (GVQDTESTLEKRETGDEENSA) are disordered. Residues 52 to 64 (ETGDEENSAKFPI) form an NEI-like region. Residues 68 to 86 (DFDTLRCMLGRVYQRCWQV) form a melanin-concentrating hormone-like region.

Belongs to the melanin-concentrating hormone family. As to expression, expressed in testis but not in brain.

This is Putative pro-MCH-like protein 2 (PMCHL2) from Homo sapiens (Human).